The primary structure comprises 506 residues: Probable cytosol aminopeptidase (506 aa).

2 residues coordinate Mn(2+): K278 and D283. K290 is an active-site residue. The Mn(2+) site is built by D301, D360, and E362. R364 is a catalytic residue.

Belongs to the peptidase M17 family. Mn(2+) serves as cofactor.

The protein localises to the cytoplasm. The enzyme catalyses Release of an N-terminal amino acid, Xaa-|-Yaa-, in which Xaa is preferably Leu, but may be other amino acids including Pro although not Arg or Lys, and Yaa may be Pro. Amino acid amides and methyl esters are also readily hydrolyzed, but rates on arylamides are exceedingly low.. It carries out the reaction Release of an N-terminal amino acid, preferentially leucine, but not glutamic or aspartic acids.. In terms of biological role, presumably involved in the processing and regular turnover of intracellular proteins. Catalyzes the removal of unsubstituted N-terminal amino acids from various peptides. This chain is Probable cytosol aminopeptidase, found in Ralstonia nicotianae (strain ATCC BAA-1114 / GMI1000) (Ralstonia solanacearum).